Here is a 317-residue protein sequence, read N- to C-terminus: Protoheme IX farnesyltransferase (317 aa).

8 helical membrane passes run 44-64 (IGLILLTLLGGWMGAAAANTF), 93-113 (HASVFAWTLTVVSFLWLWVLC), 116-136 (VLAGLFILLTIFFYIFVYTKY), 143-163 (LNIVWGGAAGCMPVVVGWAVI), 178-198 (AIVLFMVIFFWTPPHTWALAM), 221-241 (VTRQIVWYTVATVLTTFLLIP), 243-263 (ASWIHAIIAVVSGVWFLVMAV), and 288-308 (LAVYFVGLSIDAVLGWETIGG).

The protein belongs to the UbiA prenyltransferase family. Protoheme IX farnesyltransferase subfamily.

The protein localises to the cell membrane. It carries out the reaction heme b + (2E,6E)-farnesyl diphosphate + H2O = Fe(II)-heme o + diphosphate. The protein operates within porphyrin-containing compound metabolism; heme O biosynthesis; heme O from protoheme: step 1/1. Functionally, converts heme B (protoheme IX) to heme O by substitution of the vinyl group on carbon 2 of heme B porphyrin ring with a hydroxyethyl farnesyl side group. The polypeptide is Protoheme IX farnesyltransferase (Corynebacterium diphtheriae (strain ATCC 700971 / NCTC 13129 / Biotype gravis)).